A 341-amino-acid chain; its full sequence is Phosphoribosylformylglycinamidine cyclo-ligase (341 aa).

It belongs to the AIR synthase family.

It is found in the cytoplasm. The enzyme catalyses 2-formamido-N(1)-(5-O-phospho-beta-D-ribosyl)acetamidine + ATP = 5-amino-1-(5-phospho-beta-D-ribosyl)imidazole + ADP + phosphate + H(+). The protein operates within purine metabolism; IMP biosynthesis via de novo pathway; 5-amino-1-(5-phospho-D-ribosyl)imidazole from N(2)-formyl-N(1)-(5-phospho-D-ribosyl)glycinamide: step 2/2. The sequence is that of Phosphoribosylformylglycinamidine cyclo-ligase from Picosynechococcus sp. (strain ATCC 27264 / PCC 7002 / PR-6) (Agmenellum quadruplicatum).